The chain runs to 278 residues: Urease accessory protein UreD (278 aa).

It belongs to the UreD family. As to quaternary structure, ureD, UreF and UreG form a complex that acts as a GTP-hydrolysis-dependent molecular chaperone, activating the urease apoprotein by helping to assemble the nickel containing metallocenter of UreC. The UreE protein probably delivers the nickel.

It localises to the cytoplasm. In terms of biological role, required for maturation of urease via the functional incorporation of the urease nickel metallocenter. In Escherichia coli, this protein is Urease accessory protein UreD.